Consider the following 554-residue polypeptide: DNA ligase B (554 aa).

Catalysis depends on K122, which acts as the N6-AMP-lysine intermediate.

It belongs to the NAD-dependent DNA ligase family. LigB subfamily.

It carries out the reaction NAD(+) + (deoxyribonucleotide)n-3'-hydroxyl + 5'-phospho-(deoxyribonucleotide)m = (deoxyribonucleotide)n+m + AMP + beta-nicotinamide D-nucleotide.. Catalyzes the formation of phosphodiester linkages between 5'-phosphoryl and 3'-hydroxyl groups in double-stranded DNA using NAD as a coenzyme and as the energy source for the reaction. The chain is DNA ligase B from Pseudomonas fluorescens (strain SBW25).